Consider the following 232-residue polypeptide: MATPGRPWAQARSAYRASEVLRRVTGRRRDPGPQSNGPGREDARAPGRLARLLRQLRAEAASRSEVPRLLKLVERAGAGAAGAGERTGAHSRGSVCSVCGEPRGRATYPAGVLEVSERRLQEGLAAVREELGAEIEALRAELRAELDALRALLPPPPPSPPARREPRAVPRAAPRGPTLLRTLGTVSALVAASRPADDAPDGPAECGAHRAPARKNHKKMPVPPGAPQGGGD.

Residues 19–31 (EVLRRVTGRRRDP) are compositionally biased toward basic and acidic residues. Disordered stretches follow at residues 19-47 (EVLR…RAPG), 80-101 (AAGA…VCGE), 151-179 (ALLP…GPTL), and 191-232 (AASR…GGGD). Positions 211–220 (APARKNHKKM) are enriched in basic residues.

The protein belongs to the FAM246 family.

The protein is Protein FAM246B of Homo sapiens (Human).